We begin with the raw amino-acid sequence, 429 residues long: Adenylosuccinate synthetase (429 aa).

GTP-binding positions include 12–18 and 40–42; these read GDEGKGK and GHT. D13 acts as the Proton acceptor in catalysis. Mg(2+)-binding residues include D13 and G40. IMP contacts are provided by residues 13-16, 38-41, T128, R142, Q223, T238, and R302; these read DEGK and NAGH. Residue H41 is the Proton donor of the active site. 298–304 lines the substrate pocket; that stretch reads TVTGRPR. GTP is bound by residues R304, 330–332, and 412–414; these read LLD and SVG.

Belongs to the adenylosuccinate synthetase family. As to quaternary structure, homodimer. It depends on Mg(2+) as a cofactor.

The protein localises to the cytoplasm. The catalysed reaction is IMP + L-aspartate + GTP = N(6)-(1,2-dicarboxyethyl)-AMP + GDP + phosphate + 2 H(+). The protein operates within purine metabolism; AMP biosynthesis via de novo pathway; AMP from IMP: step 1/2. Plays an important role in the de novo pathway of purine nucleotide biosynthesis. Catalyzes the first committed step in the biosynthesis of AMP from IMP. In Lactobacillus johnsonii (strain CNCM I-12250 / La1 / NCC 533), this protein is Adenylosuccinate synthetase.